The chain runs to 180 residues: Probable DNA-directed RNA polymerase subunit delta (180 aa).

One can recognise an HTH HARE-type domain in the interval 14-81 (LSMIEVARAI…GHNVWALRSW (68 aa)). Residues 89-180 (EEVNHPEDEE…HQDDLDDDDE (92 aa)) are disordered. Over residues 115–163 (DSDDDDIIDYDSDDPEDEDLDVDEEDTNEDDYSDDDLDDADDNELDDGI) the composition is skewed to acidic residues.

Belongs to the RpoE family. In terms of assembly, RNAP is composed of a core of 2 alpha, a beta and a beta' subunits. The core is associated with a delta subunit and one of several sigma factors.

Participates in both the initiation and recycling phases of transcription. In the presence of the delta subunit, RNAP displays an increased specificity of transcription, a decreased affinity for nucleic acids, and an increased efficiency of RNA synthesis because of enhanced recycling. This Lactobacillus johnsonii (strain CNCM I-12250 / La1 / NCC 533) protein is Probable DNA-directed RNA polymerase subunit delta.